We begin with the raw amino-acid sequence, 222 residues long: Probable GTP-binding protein EngB (222 aa).

The EngB-type G domain occupies 27 to 202; that stretch reads TGIEVAFAGR…AKKLDEWFLG (176 aa). GTP-binding positions include 35–42, 61–65, 81–84, 148–151, and 181–183; these read GRSNAGKS, GRTQL, DLPG, TKAD, and FSS. The Mg(2+) site is built by serine 42 and threonine 63.

The protein belongs to the TRAFAC class TrmE-Era-EngA-EngB-Septin-like GTPase superfamily. EngB GTPase family. Mg(2+) serves as cofactor.

Its function is as follows. Necessary for normal cell division and for the maintenance of normal septation. In Pseudoalteromonas translucida (strain TAC 125), this protein is Probable GTP-binding protein EngB.